Here is a 49-residue protein sequence, read N- to C-terminus: Agglutinin-1 (49 aa).

In terms of assembly, homooligomer. Post-translationally, glycosylated.

In terms of biological role, beta-galactoside specific lectin. Has a hemagglutinating activity on erythrocytes. The polypeptide is Agglutinin-1 (Pomacea flagellata (Apple snail)).